The primary structure comprises 489 residues: Alpha-amylase (489 aa).

Residues 1–16 form the signal peptide; it reads HFKPILVLCLATLALG. Cys44 and Cys102 are disulfide-bonded. 3 residues coordinate Ca(2+): Asn116, Arg164, and Asp173. A disulfide bridge connects residues Cys152 and Cys166. Arg201 contributes to the chloride binding site. Residue Asp203 is the Nucleophile of the active site. His207 lines the Ca(2+) pocket. Catalysis depends on Glu240, which acts as the Proton donor. Positions 303 and 339 each coordinate chloride. 2 disulfides stabilise this stretch: Cys372–Cys378 and Cys443–Cys455.

It belongs to the glycosyl hydrolase 13 family. Monomer. It depends on Ca(2+) as a cofactor. Requires chloride as cofactor.

The catalysed reaction is Endohydrolysis of (1-&gt;4)-alpha-D-glucosidic linkages in polysaccharides containing three or more (1-&gt;4)-alpha-linked D-glucose units.. This is Alpha-amylase from Tribolium castaneum (Red flour beetle).